A 155-amino-acid chain; its full sequence is SsrA-binding protein (155 aa).

It belongs to the SmpB family.

It localises to the cytoplasm. In terms of biological role, required for rescue of stalled ribosomes mediated by trans-translation. Binds to transfer-messenger RNA (tmRNA), required for stable association of tmRNA with ribosomes. tmRNA and SmpB together mimic tRNA shape, replacing the anticodon stem-loop with SmpB. tmRNA is encoded by the ssrA gene; the 2 termini fold to resemble tRNA(Ala) and it encodes a 'tag peptide', a short internal open reading frame. During trans-translation Ala-aminoacylated tmRNA acts like a tRNA, entering the A-site of stalled ribosomes, displacing the stalled mRNA. The ribosome then switches to translate the ORF on the tmRNA; the nascent peptide is terminated with the 'tag peptide' encoded by the tmRNA and targeted for degradation. The ribosome is freed to recommence translation, which seems to be the essential function of trans-translation. The chain is SsrA-binding protein from Streptococcus equi subsp. zooepidemicus (strain MGCS10565).